The sequence spans 267 residues: NAD kinase 2 (267 aa).

Catalysis depends on Asp52, which acts as the Proton acceptor. NAD(+) contacts are provided by residues 52–53 (DA), 124–125 (NE), Arg151, Asp153, 164–169 (TAYNKS), and Ala188.

This sequence belongs to the NAD kinase family. A divalent metal cation serves as cofactor.

It localises to the cytoplasm. It catalyses the reaction NAD(+) + ATP = ADP + NADP(+) + H(+). Functionally, involved in the regulation of the intracellular balance of NAD and NADP, and is a key enzyme in the biosynthesis of NADP. Catalyzes specifically the phosphorylation on 2'-hydroxyl of the adenosine moiety of NAD to yield NADP. This chain is NAD kinase 2, found in Bacillus cereus (strain ATCC 10987 / NRS 248).